Consider the following 134-residue polypeptide: Fluoride-specific ion channel FluC 2 (134 aa).

Helical transmembrane passes span 1-21 (MNYF…EITG), 28-48 (IFPV…LFFM), 68-88 (GFLG…LLLF), and 92-112 (LLIG…SGIL). Glycine 71 and threonine 74 together coordinate Na(+).

The protein belongs to the fluoride channel Fluc/FEX (TC 1.A.43) family.

The protein localises to the cell membrane. It carries out the reaction fluoride(in) = fluoride(out). With respect to regulation, na(+) is not transported, but it plays an essential structural role and its presence is essential for fluoride channel function. In terms of biological role, fluoride-specific ion channel. Important for reducing fluoride concentration in the cell, thus reducing its toxicity. The sequence is that of Fluoride-specific ion channel FluC 2 from Carboxydothermus hydrogenoformans (strain ATCC BAA-161 / DSM 6008 / Z-2901).